Here is a 469-residue protein sequence, read N- to C-terminus: uncharacterized protein (469 aa).

Positions 13-81 (TPLYEQLYTF…PKIGWFAAEV (69 aa)) constitute an HTH gntR-type domain. Positions 41–60 (KRRLSSLLDVSTATIERAYE) form a DNA-binding region, H-T-H motif. Lys-309 is modified (N6-(pyridoxal phosphate)lysine).

The protein in the C-terminal section; belongs to the class-I pyridoxal-phosphate-dependent aminotransferase family. Pyridoxal 5'-phosphate serves as cofactor.

This is an uncharacterized protein from Bacillus subtilis (strain 168).